The following is a 117-amino-acid chain: MQTSNILAKIEAPLFREGIPDFRVGDTVRVHYRIVEGEKERIQVFQGVVLKRHRAGVRSTFTVRKVSFTVGVERMFLLHSPRIDKVEIVSRGVVRRSRLFYLRNLAGKAARVRDAKD.

The protein belongs to the bacterial ribosomal protein bL19 family.

In terms of biological role, this protein is located at the 30S-50S ribosomal subunit interface and may play a role in the structure and function of the aminoacyl-tRNA binding site. This Sorangium cellulosum (strain So ce56) (Polyangium cellulosum (strain So ce56)) protein is Large ribosomal subunit protein bL19.